A 602-amino-acid polypeptide reads, in one-letter code: MLSVIRVHLPSEIPIVGCELTPYVLLRRPDKTPSTDDVPESAPLEGHFLKYRWFRVQSDKKVAICSVHPSETATLQCLGCLKSKVPVAKSYHCSTKCFSDAWQHHRVLHERAASAATEGNDEEELPRLNSSGSGSGVLSTSVSLTNGSSSVYPSAITQKTGAGGETLVEVGRSKTYTPMADDICHVLKFECVVVNAETKQNVGLSCTILTSRVIPAPSPSPRRLISISGTDVTGHLDSNGRPLSMGTFTVLSYNILSDTYASSDIYSYCPTWALAWTYRRQNLLREIVKYRADIVCLQEVQNDHFEEFFLPELDKHGYQGLFKRKTNEVFIGNTNTIDGCATFFRRDRFSHVKKYEVEFNKAAQSLTEAIIPVSQKKNALNRLVKDNVALIVVLEAKFGSQAADNPGKRQLLCVANTHVNVPHELKDVKLWQVHTLLKGLEKIAASADIPMLVCGDFNTVPASAPHTLLAVGKVDPLHPDLMVDPLGILRPHSKLTHQLPLVSAYSQFAKMGGNVITEQQRRRLDPASSEPLFTNCTRDFIGTLDYIFYTADTLTVESLLELLDEESLRKDTALPSPEWSSDHIALLAEFRCMPRARRNNIL.

The disordered stretch occupies residues 113 to 136 (ASAATEGNDEEELPRLNSSGSGSG). Residue Glu299 coordinates Mg(2+).

The protein belongs to the CCR4/nocturin family. As to quaternary structure, component of the CCR4-NOT complex, at least composed of CRR4 and CAF1 proteins. Mg(2+) serves as cofactor.

The protein localises to the nucleus. It localises to the cytoplasm. The enzyme catalyses Exonucleolytic cleavage of poly(A) to 5'-AMP.. Acts as a catalytic component of the CCR4-NOT core complex, which in the nucleus seems to be a general transcription factor, and in the cytoplasm the major mRNA deadenylase involved in mRNA turnover. This Arabidopsis thaliana (Mouse-ear cress) protein is Carbon catabolite repressor protein 4 homolog 1 (CCR4-1).